A 141-amino-acid polypeptide reads, in one-letter code: Nucleoside triphosphatase NudI (141 aa).

A Nudix hydrolase domain is found at 1–141 (MRQRTIVCPL…RVTLSQKGLL (141 aa)). The Nudix box motif lies at 38–59 (GGVEPVERIEEALRREIREELG).

The protein belongs to the Nudix hydrolase family. NudI subfamily. In terms of assembly, monomer. Mg(2+) serves as cofactor.

It carries out the reaction a ribonucleoside 5'-triphosphate + H2O = a ribonucleoside 5'-phosphate + diphosphate + H(+). The catalysed reaction is a 2'-deoxyribonucleoside 5'-triphosphate + H2O = a 2'-deoxyribonucleoside 5'-phosphate + diphosphate + H(+). The enzyme catalyses dUTP + H2O = dUMP + diphosphate + H(+). It catalyses the reaction dTTP + H2O = dTMP + diphosphate + H(+). It carries out the reaction dCTP + H2O = dCMP + diphosphate + H(+). Its function is as follows. Catalyzes the hydrolysis of nucleoside triphosphates, with a preference for pyrimidine deoxynucleoside triphosphates (dUTP, dTTP and dCTP). The chain is Nucleoside triphosphatase NudI from Klebsiella pneumoniae (strain 342).